We begin with the raw amino-acid sequence, 69 residues long: U2-agatoxin-Ao1w (69 aa).

A signal peptide spans methionine 1–alanine 20. The propeptide occupies valine 21–arginine 34. Disulfide bonds link cysteine 37–cysteine 53, cysteine 44–cysteine 58, and cysteine 52–cysteine 68.

This sequence belongs to the neurotoxin 01 (U2-agtx) family. In terms of tissue distribution, expressed by the venom gland.

Its subcellular location is the secreted. Its function is as follows. Insect active toxin causing rapid but reversible paralysis in crickets. No activity shown in mammals. Does not show effect on mammalian voltage-gated calcium channels. This Agelena orientalis (Funnel-web spider) protein is U2-agatoxin-Ao1w.